Reading from the N-terminus, the 198-residue chain is Na(+)-translocating NADH-quinone reductase subunit E (198 aa).

Helical transmembrane passes span 11–31 (SIFI…FLAV), 39–59 (MGLG…NNLI), 77–97 (FLSF…LEMA), 110–130 (GIFL…SFMV), 140–160 (VVYG…MAGI), and 176–196 (LGIT…FSGI).

This sequence belongs to the NqrDE/RnfAE family. In terms of assembly, composed of six subunits; NqrA, NqrB, NqrC, NqrD, NqrE and NqrF.

The protein resides in the cell inner membrane. It carries out the reaction a ubiquinone + n Na(+)(in) + NADH + H(+) = a ubiquinol + n Na(+)(out) + NAD(+). In terms of biological role, NQR complex catalyzes the reduction of ubiquinone-1 to ubiquinol by two successive reactions, coupled with the transport of Na(+) ions from the cytoplasm to the periplasm. NqrA to NqrE are probably involved in the second step, the conversion of ubisemiquinone to ubiquinol. This is Na(+)-translocating NADH-quinone reductase subunit E from Aeromonas salmonicida (strain A449).